The sequence spans 410 residues: Putative transposase Rv3428c (410 aa).

The Integrase catalytic domain maps to 40-220 (VPRGPVDAGS…QPLRMFEAVE (181 aa)). The disordered stretch occupies residues 390–410 (AANEPTTSSPASTAGGVPARP).

Belongs to the transposase IS21/IS408/IS1162 family.

This is Putative transposase Rv3428c from Mycobacterium tuberculosis (strain ATCC 25618 / H37Rv).